The following is a 370-amino-acid chain: NSFL1 cofactor p47 (370 aa).

Residues 54 to 73 (SQATPSSVSRGTAPSDNRVT) form a disordered region. 3 positions are modified to phosphoserine: S74, S102, and S114. Disordered regions lie at residues 80–116 (HDQD…RSPN) and 137–157 (VTKS…GYRL). The Nuclear localization signal motif lies at 109–115 (PPRKRSP). At S140 the chain carries Phosphoserine; by CDK1. Phosphotyrosine is present on Y167. The Nuclear localization signal signature appears at 172-175 (RRRH). Residues S176, S192, and S272 each carry the phosphoserine modification. One can recognise an SEP domain in the interval 179–244 (DVHVVLKLWK…MEDHRDEDFV (66 aa)). The disordered stretch occupies residues 272–292 (SPAQQAENEAKASSSISIDES). The UBX domain maps to 291 to 368 (ESQPTTNIQI…NLLNAVIVQR (78 aa)).

Part of a ternary complex containing STX5A, NSFL1C and VCP. NSFL1C forms a homotrimer that binds to one end of a VCP homohexamer. The complex binds to membranes enriched in phosphatidylethanolamine-containing lipids and promotes Golgi membrane fusion. Interaction with VCIP135 leads to dissociation of the complex via ATP hydrolysis by VCP. Binds ubiquitin and mono-ubiquitinated proteins via its N-terminal UBA-like domain when bound to VCP. Post-translationally, phosphorylated during mitosis. Phosphorylation inhibits interaction with Golgi membranes and is required for the fragmentation of the Golgi stacks during mitosis.

It localises to the nucleus. The protein localises to the golgi apparatus. It is found in the golgi stack. Its subcellular location is the chromosome. The protein resides in the cytoplasm. It localises to the cytoskeleton. The protein localises to the microtubule organizing center. It is found in the centrosome. Its function is as follows. Reduces the ATPase activity of VCP. Necessary for the fragmentation of Golgi stacks during mitosis and for VCP-mediated reassembly of Golgi stacks after mitosis. May play a role in VCP-mediated formation of transitional endoplasmic reticulum (tER). Inhibits the activity of CTSL (in vitro). Together with UBXN2B/p37, regulates the centrosomal levels of kinase AURKA/Aurora A during mitotic progression by promoting AURKA removal from centrosomes in prophase. Also, regulates spindle orientation during mitosis. This is NSFL1 cofactor p47 (NSFL1C) from Bos taurus (Bovine).